The primary structure comprises 527 residues: tRNA-2-methylthio-N(6)-dimethylallyladenosine synthase (527 aa).

The tract at residues 1 to 27 (MMNEKQRLQYTAQIETDHPTDKKSALD) is disordered. A compositionally biased stretch (basic and acidic residues) spans 15-27 (ETDHPTDKKSALD). The MTTase N-terminal domain occupies 84 to 202 (RKFYIRTYGC…LPYILKEAYM (119 aa)). The [4Fe-4S] cluster site is built by Cys93, Cys129, Cys163, Cys239, Cys243, and Cys246. The Radical SAM core domain occupies 225–455 (RKGNIKAWVN…NALVNEISAK (231 aa)). Residues 458–521 (KEYEGQVVEV…TWTLNGEMVE (64 aa)) enclose the TRAM domain.

It belongs to the methylthiotransferase family. MiaB subfamily. As to quaternary structure, monomer. The cofactor is [4Fe-4S] cluster.

The protein localises to the cytoplasm. The catalysed reaction is N(6)-dimethylallyladenosine(37) in tRNA + (sulfur carrier)-SH + AH2 + 2 S-adenosyl-L-methionine = 2-methylsulfanyl-N(6)-dimethylallyladenosine(37) in tRNA + (sulfur carrier)-H + 5'-deoxyadenosine + L-methionine + A + S-adenosyl-L-homocysteine + 2 H(+). Catalyzes the methylthiolation of N6-(dimethylallyl)adenosine (i(6)A), leading to the formation of 2-methylthio-N6-(dimethylallyl)adenosine (ms(2)i(6)A) at position 37 in tRNAs that read codons beginning with uridine. The chain is tRNA-2-methylthio-N(6)-dimethylallyladenosine synthase from Anoxybacillus flavithermus (strain DSM 21510 / WK1).